A 192-amino-acid chain; its full sequence is Fe/S biogenesis protein NfuA (192 aa).

[4Fe-4S] cluster contacts are provided by C149 and C152.

It belongs to the NfuA family. Homodimer. [4Fe-4S] cluster is required as a cofactor.

Involved in iron-sulfur cluster biogenesis. Binds a 4Fe-4S cluster, can transfer this cluster to apoproteins, and thereby intervenes in the maturation of Fe/S proteins. Could also act as a scaffold/chaperone for damaged Fe/S proteins. This chain is Fe/S biogenesis protein NfuA, found in Tolumonas auensis (strain DSM 9187 / NBRC 110442 / TA 4).